Here is an 88-residue protein sequence, read N- to C-terminus: U13-theraphotoxin-Cg1a (88 aa).

The first 21 residues, 1–21 (MKVSVLITLAVLGVMFVWASA), serve as a signal peptide directing secretion. Residues 22-52 (AELEQSGSDQKDSDSPAWLKSMERIFQSEER) constitute a propeptide that is removed on maturation. 3 cysteine pairs are disulfide-bonded: Cys54–Cys68, Cys61–Cys73, and Cys67–Cys80.

Belongs to the neurotoxin 10 (Hwtx-1) family. 41 (Jztx-36) subfamily. As to expression, expressed by the venom gland.

It localises to the secreted. Functionally, probable ion channel inhibitor. This is U13-theraphotoxin-Cg1a from Chilobrachys guangxiensis (Chinese earth tiger tarantula).